The following is a 345-amino-acid chain: Flotillin-like protein FloA 1 (345 aa).

A helical membrane pass occupies residues Leu-26–Phe-46.

This sequence belongs to the flotillin-like FloA family. In terms of assembly, homooligomerizes.

The protein localises to the cell membrane. Its subcellular location is the membrane raft. In terms of biological role, found in functional membrane microdomains (FMM) that may be equivalent to eukaryotic membrane rafts. FMMs are highly dynamic and increase in number as cells age. Flotillins are thought to be important factors in membrane fluidity. This chain is Flotillin-like protein FloA 1, found in Rhodopirellula baltica (strain DSM 10527 / NCIMB 13988 / SH1).